A 255-amino-acid polypeptide reads, in one-letter code: Ribosomal RNA small subunit methyltransferase A (255 aa).

The S-adenosyl-L-methionine site is built by Asn-12, Leu-14, Gly-39, Glu-60, Asp-84, and Asn-106.

This sequence belongs to the class I-like SAM-binding methyltransferase superfamily. rRNA adenine N(6)-methyltransferase family. RsmA subfamily.

It is found in the cytoplasm. The catalysed reaction is adenosine(1518)/adenosine(1519) in 16S rRNA + 4 S-adenosyl-L-methionine = N(6)-dimethyladenosine(1518)/N(6)-dimethyladenosine(1519) in 16S rRNA + 4 S-adenosyl-L-homocysteine + 4 H(+). Specifically dimethylates two adjacent adenosines (A1518 and A1519) in the loop of a conserved hairpin near the 3'-end of 16S rRNA in the 30S particle. May play a critical role in biogenesis of 30S subunits. The chain is Ribosomal RNA small subunit methyltransferase A from Janthinobacterium sp. (strain Marseille) (Minibacterium massiliensis).